The following is a 164-amino-acid chain: V-type proton ATPase 16 kDa proteolipid subunit (164 aa).

Topologically, residues 1–9 (MASFSGDET) are lumenal. Residues 10 to 32 (APFFGFLGAAAALVFSCMGAAYG) traverse the membrane as a helical segment. Topologically, residues 33-54 (TAKSGVGVASMGVMRPELVMKS) are cytoplasmic. Residues 55-75 (IVPVVMAGVLGIYGLIIAVII) form a helical membrane-spanning segment. At 76–94 (STGINPKAKSYYLFDGYAH) the chain is on the lumenal side. The helical transmembrane segment at 95-116 (LSSGLACGLAGLSAGMAIGIVG) threads the bilayer. At 117–128 (DAGVRANAQQPK) the chain is on the cytoplasmic side. The helical transmembrane segment at 129 to 154 (LFVGMILILIFAEALALYGLIVGIIL) threads the bilayer. Residues 155–164 (SSRAGQSRAD) lie on the Lumenal side of the membrane.

Belongs to the V-ATPase proteolipid subunit family. In terms of assembly, V-ATPase is a heteromultimeric enzyme composed of a peripheral catalytic V1 complex (main components: subunits A, B, C, D, E, and F) attached to an integral membrane V0 proton pore complex (main component: the proteolipid protein; which is present as a hexamer that forms the proton-conducting pore).

The protein resides in the vacuole membrane. In terms of biological role, proton-conducting pore forming subunit of the membrane integral V0 complex of vacuolar ATPase. V-ATPase is responsible for acidifying a variety of intracellular compartments in eukaryotic cells. This Vigna radiata var. radiata (Mung bean) protein is V-type proton ATPase 16 kDa proteolipid subunit.